Here is a 1386-residue protein sequence, read N- to C-terminus: Putative ATP-dependent RNA helicase DHX57 (1386 aa).

Basic residues predominate over residues 1–11; sequence MSSSVRRKGKP. 2 disordered regions span residues 1–106 and 120–147; these read MSSS…MTSE and EQDA…NDER. Composition is skewed to gly residues over residues 12–23 and 35–50; these read GKGGGKGSSRGG and GSGG…GGGN. Residues 101–125 adopt a coiled-coil conformation; that stretch reads LHMTSENQEKVKALLRDLQEQDADA. Residues Ser-127 and Ser-132 each carry the phosphoserine modification. Positions 133-143 are enriched in acidic residues; sequence GEEEDDEPDCC. One can recognise a UBA domain in the interval 180–220; it reads TVSPFAVQKLSRYGFNTERCQAVLRMCDGDVGASLEHLLTQ. The segment at 299–326 adopts a C3H1-type zinc-finger fold; sequence ENSLEICKFYLKGNCKFGSKCRFKHEVP. Residues Ser-475, Ser-477, and Ser-480 each carry the phosphoserine modification. The Helicase ATP-binding domain maps to 554–721; sequence LNLLRKHQVV…FNSCPVITIP (168 aa). 567–574 contacts ATP; it reads GMTGCGKT. The DEVH box motif lies at 668–671; that stretch reads DEVH. In terms of domain architecture, Helicase C-terminal spans 830–1010; sequence LIEALLEWIV…QLCLRIKILE (181 aa).

This sequence belongs to the DEAD box helicase family. DEAH subfamily.

The enzyme catalyses ATP + H2O = ADP + phosphate + H(+). Functionally, probable ATP-binding RNA helicase. The sequence is that of Putative ATP-dependent RNA helicase DHX57 (DHX57) from Homo sapiens (Human).